Consider the following 223-residue polypeptide: RNA-free ribonuclease P (223 aa).

This sequence belongs to the HARP family.

The catalysed reaction is Endonucleolytic cleavage of RNA, removing 5'-extranucleotides from tRNA precursor.. In terms of biological role, RNA-free RNase P that catalyzes the removal of the 5'-leader sequence from pre-tRNA to produce the mature 5'-terminus. The protein is RNA-free ribonuclease P of Methanococcus vannielii (strain ATCC 35089 / DSM 1224 / JCM 13029 / OCM 148 / SB).